The primary structure comprises 944 residues: UvrABC system protein A (944 aa).

Glycine 31 to serine 38 contacts ATP. Residues cysteine 253–cysteine 280 form a C4-type zinc finger. 2 consecutive ABC transporter domains span residues tryptophan 309–leucine 586 and arginine 606–lysine 936. Glycine 639–serine 646 contacts ATP. The C4-type zinc finger occupies cysteine 739–cysteine 765.

The protein belongs to the ABC transporter superfamily. UvrA family. Forms a heterotetramer with UvrB during the search for lesions.

The protein localises to the cytoplasm. Its function is as follows. The UvrABC repair system catalyzes the recognition and processing of DNA lesions. UvrA is an ATPase and a DNA-binding protein. A damage recognition complex composed of 2 UvrA and 2 UvrB subunits scans DNA for abnormalities. When the presence of a lesion has been verified by UvrB, the UvrA molecules dissociate. The protein is UvrABC system protein A of Pseudomonas putida (strain ATCC 47054 / DSM 6125 / CFBP 8728 / NCIMB 11950 / KT2440).